Reading from the N-terminus, the 376-residue chain is Probable dual-specificity RNA methyltransferase RlmN (376 aa).

The segment at 1-25 (MSDSERTSLPLVFDEPRGRKKPPRH) is disordered. The active-site Proton acceptor is Glu113. Positions 119–362 (YPDRATMCVS…PTTVRDTRGR (244 aa)) constitute a Radical SAM core domain. A disulfide bridge connects residues Cys126 and Cys368. Residues Cys133, Cys137, and Cys140 each contribute to the [4Fe-4S] cluster site. S-adenosyl-L-methionine is bound by residues 188–189 (GE), Ser222, 245–247 (SLH), and Asn325. The active-site S-methylcysteine intermediate is Cys368.

This sequence belongs to the radical SAM superfamily. RlmN family. [4Fe-4S] cluster is required as a cofactor.

Its subcellular location is the cytoplasm. It catalyses the reaction adenosine(2503) in 23S rRNA + 2 reduced [2Fe-2S]-[ferredoxin] + 2 S-adenosyl-L-methionine = 2-methyladenosine(2503) in 23S rRNA + 5'-deoxyadenosine + L-methionine + 2 oxidized [2Fe-2S]-[ferredoxin] + S-adenosyl-L-homocysteine. It carries out the reaction adenosine(37) in tRNA + 2 reduced [2Fe-2S]-[ferredoxin] + 2 S-adenosyl-L-methionine = 2-methyladenosine(37) in tRNA + 5'-deoxyadenosine + L-methionine + 2 oxidized [2Fe-2S]-[ferredoxin] + S-adenosyl-L-homocysteine. Its function is as follows. Specifically methylates position 2 of adenine 2503 in 23S rRNA and position 2 of adenine 37 in tRNAs. The polypeptide is Probable dual-specificity RNA methyltransferase RlmN (Nocardioides sp. (strain ATCC BAA-499 / JS614)).